A 275-amino-acid chain; its full sequence is MLKTYQKLLAMGIFLIVLCSGNAAFAATNQVGGLSNVGFFHDYLIEPFSALLKGVAGLFHGEYGLSIILVTIIVRIVVLPLFVNQFKKQRIFQEKMAVIKPQVDSIQVKLKKTKDPEKQKELQMEMMKLYQEHNINPLAMGCLPMLIQSPIMIGLYYAIRSTPEIASHSFLWFSLGQSDILMSLSAGIMYFVQAYIAQKLSAKYSAVPQNPAAQQSAKLMVFIFPVMMTIFSLNVPAALPLYWFTSGLFLTVQNIVLQMTHHKSKKTAALTESVK.

A signal peptide spans 1–18 (MLKTYQKLLAMGIFLIVL). Residue C19 is the site of N-palmitoyl cysteine attachment. The S-diacylglycerol cysteine moiety is linked to residue C19. Helical transmembrane passes span 63–83 (YGLS…PLFV), 139–159 (AMGC…YYAI), 172–192 (WFSL…MYFV), 219–239 (LMVF…PAAL), and 240–260 (PLYW…LQMT).

It belongs to the OXA1/ALB3/YidC family. Type 2 subfamily. Mostly monomeric, it may also form dimers. Interacts with SpoIIIAE. Forms a complex with the F(1)F(0) ATP synthase in which can be found the alpha, beta, gamma, delta and epsilon subunits of F(1) and a, b and subunits of F(0). YqgA is found in the same complex.

The protein localises to the cell membrane. Its function is as follows. Required for the insertion and/or proper folding and/or complex formation of integral membrane proteins into the membrane. Involved in integration of membrane proteins that insert both dependently and independently of the Sec translocase complex, as well as at least some lipoproteins. Also involved in protein secretion processes. It has an overlapping, although partly distinct, function compared to SpoIIIJ(MisCB). This Bacillus subtilis (strain 168) protein is Membrane protein insertase MisCB (misCB).